The chain runs to 525 residues: Zinc finger C2HC domain-containing protein 1C (525 aa).

Basic and acidic residues predominate over residues 23-34 (AHGLHSAKHDPY). Disordered regions lie at residues 23–48 (AHGL…MGHL), 85–107 (CPHS…GKGL), and 145–171 (VHRK…PDSS). Residues 36–48 (QSDSPQRSSMGHL) are compositionally biased toward polar residues. The span at 90-102 (GISQQGSGNNAQG) shows a compositional bias: low complexity. The stretch at 207 to 252 (TQIQRLEAAGESLQKEIRRKEILLREKLKKTEEGLRRIQREKKQAI) forms a coiled coil. Disordered regions lie at residues 292–316 (SRNR…LSDY), 330–349 (NNKI…SQPA), and 356–379 (LQAS…EQEL). The segment covering 301 to 312 (CEQAQENSSPLQ) has biased composition (polar residues). Over residues 359-373 (SSLSGTPGSSGSSSS) the composition is skewed to low complexity. C2HC/C3H-type zinc fingers lie at residues 378 to 407 (ELGK…MQGS) and 487 to 516 (DYVQ…IKNR). Zn(2+) is bound by residues C382, C385, H397, C401, C491, C494, H506, and C510.

Belongs to the ZC2HC1 family. Zn(2+) serves as cofactor.

This chain is Zinc finger C2HC domain-containing protein 1C (Zc2hc1c), found in Rattus norvegicus (Rat).